Consider the following 388-residue polypeptide: Nesprin-4 (388 aa).

Residues M1–P339 are Cytoplasmic-facing. Positions E60–D92 are disordered. The segment covering S78–D92 has biased composition (basic and acidic residues). One can recognise a KASH domain in the interval V331 to I388. Residues L340–L360 form a helical; Anchor for type IV membrane protein membrane-spanning segment. Residues S361–I388 are Perinuclear space-facing.

This sequence belongs to the nesprin family. In terms of assembly, core component of LINC complexes which are composed of inner nuclear membrane SUN domain-containing proteins coupled to outer nuclear membrane KASH domain-containing nesprins. SUN and KASH domain-containing proteins seem to bind each other promiscuously; however, differentially expression of LINC complex constituents can give rise to specific assemblies. Probably part of a SUN1-containing LINC complex. Interacts with kinesins KIF5B and KLC1. In terms of processing, the disulfid bond with SUN1 or SUN2 is required for stability of the respective LINC complex under tensile forces. As to expression, expressed in secretory epithelial cells, such as those found in exocrine pancreas, bulbourethral gland, mammary gland and salivary gland (at protein level). Also expressed in the cochlea, where it is restricted primarily to the 3 rows of outer hair cells and 1 row of inner hair cells (at protein level). Not detected in other cells of the cochlea, including Deiter's cells and pillar cells, nor in liver and kidney (at protein level).

Its subcellular location is the nucleus outer membrane. As a component of the LINC (LInker of Nucleoskeleton and Cytoskeleton) complex, involved in the connection between the nuclear lamina and the cytoskeleton. The nucleocytoplasmic interactions established by the LINC complex play an important role in the transmission of mechanical forces across the nuclear envelope and in nuclear movement and positioning. Behaves as a kinesin cargo, providing a functional binding site for kinesin-1 at the nuclear envelope. Hence may contribute to the establishment of secretory epithelial morphology, by promoting kinesin-dependent apical migration of the centrosome and Golgi apparatus and basal localization of the nucleus. This chain is Nesprin-4 (Syne4), found in Mus musculus (Mouse).